The following is a 135-amino-acid chain: Mediator of RNA polymerase II transcription subunit 10 (135 aa).

The protein belongs to the Mediator complex subunit 10 family. In terms of assembly, component of the Mediator complex.

The protein resides in the nucleus. Component of the Mediator complex, a coactivator involved in the regulated transcription of nearly all RNA polymerase II-dependent genes. Mediator functions as a bridge to convey information from gene-specific regulatory proteins to the basal RNA polymerase II transcription machinery. Mediator is recruited to promoters by direct interactions with regulatory proteins and serves as a scaffold for the assembly of a functional preinitiation complex with RNA polymerase II and the general transcription factors. In Xenopus tropicalis (Western clawed frog), this protein is Mediator of RNA polymerase II transcription subunit 10 (med10).